The sequence spans 274 residues: Thiamine kinase (274 aa).

Belongs to the thiamine kinase family.

The catalysed reaction is thiamine + ATP = thiamine phosphate + ADP + H(+). The protein operates within cofactor biosynthesis; thiamine diphosphate biosynthesis; thiamine phosphate from thiamine: step 1/1. Its function is as follows. Catalyzes the ATP-dependent phosphorylation of thiamine to thiamine phosphate. Is involved in thiamine salvage. In Salmonella heidelberg (strain SL476), this protein is Thiamine kinase.